Reading from the N-terminus, the 556-residue chain is 2-succinyl-5-enolpyruvyl-6-hydroxy-3-cyclohexene-1-carboxylate synthase (556 aa).

It belongs to the TPP enzyme family. MenD subfamily. In terms of assembly, homodimer. Mg(2+) is required as a cofactor. Requires Mn(2+) as cofactor. Thiamine diphosphate serves as cofactor.

The enzyme catalyses isochorismate + 2-oxoglutarate + H(+) = 5-enolpyruvoyl-6-hydroxy-2-succinyl-cyclohex-3-ene-1-carboxylate + CO2. The protein operates within quinol/quinone metabolism; 1,4-dihydroxy-2-naphthoate biosynthesis; 1,4-dihydroxy-2-naphthoate from chorismate: step 2/7. Its pathway is quinol/quinone metabolism; menaquinone biosynthesis. Catalyzes the thiamine diphosphate-dependent decarboxylation of 2-oxoglutarate and the subsequent addition of the resulting succinic semialdehyde-thiamine pyrophosphate anion to isochorismate to yield 2-succinyl-5-enolpyruvyl-6-hydroxy-3-cyclohexene-1-carboxylate (SEPHCHC). This is 2-succinyl-5-enolpyruvyl-6-hydroxy-3-cyclohexene-1-carboxylate synthase from Salmonella typhi.